Here is a 538-residue protein sequence, read N- to C-terminus: [Pyruvate dehydrogenase [acetyl-transferring]]-phosphatase 1, mitochondrial (538 aa).

The N-terminal 71 residues, 1-71 (MPAPTQLFFP…WWQYTQGRRY (71 aa)), are a transit peptide targeting the mitochondrion. In terms of domain architecture, PPM-type phosphatase spans 109-525 (ILGFDSNQLP…DDITIIVVQF (417 aa)). Mn(2+) is bound by residues aspartate 144 and glycine 145. Lysine 202 carries the N6-acetyllysine modification. The Mn(2+) site is built by aspartate 418 and aspartate 516.

Belongs to the PP2C family. In terms of assembly, heterodimer of a catalytic (PDP1) and a regulatory (PDPR) subunit. Mn(2+) serves as cofactor. Requires Mg(2+) as cofactor.

It is found in the mitochondrion. It carries out the reaction O-phospho-L-seryl-[pyruvate dehydrogenase E1 alpha subunit] + H2O = L-seryl-[pyruvate dehydrogenase E1 alpha subunit] + phosphate. Magnesium-dependent and calcium-stimulated. PDP1 activity strongly depends on its Ca(2+)-dependent binding to the lipoyl domain of E2 subunit of component of the pyruvate dehydrogenase complex. Its function is as follows. Mitochondrial enzyme that catalyzes the dephosphorylation and concomitant reactivation of the alpha subunit of the E1 component of the pyruvate dehydrogenase complex (PDC), thereby stimulating the conversion of pyruvate into acetyl-CoA. This is [Pyruvate dehydrogenase [acetyl-transferring]]-phosphatase 1, mitochondrial (Pdp1) from Mus musculus (Mouse).